The sequence spans 244 residues: 14-3-3 protein homolog 1 (244 aa).

It belongs to the 14-3-3 family.

This chain is 14-3-3 protein homolog 1, found in Echinococcus granulosus (Hydatid tapeworm).